The chain runs to 516 residues: Delta(24)-sterol reductase (516 aa).

An N-terminal signal peptide occupies residues 1 to 22; sequence MEPAVSLAVCALLFLLWVRVKG. Topologically, residues 23–31 are lumenal; it reads LEFVLIHQR. A helical transmembrane segment spans residues 32 to 52; the sequence is WVFVCLFLLPLSLIFDIYYYV. The Cytoplasmic portion of the chain corresponds to 53-516; that stretch reads RAWVVFKLSS…YDKICKAARH (464 aa). One can recognise an FAD-binding PCMH-type domain in the interval 58–234; it reads FKLSSAPRLH…VAAEIRIIPA (177 aa). Position 163-175 (163-175) interacts with FAD; the sequence is TVGGLIMGTGIES.

The protein belongs to the FAD-binding oxidoreductase/transferase type 4 family. FAD is required as a cofactor.

The protein localises to the endoplasmic reticulum membrane. Its subcellular location is the golgi apparatus membrane. The catalysed reaction is 5alpha-cholest-8-en-3beta-ol + NADP(+) = zymosterol + NADPH + H(+). The enzyme catalyses cholesterol + NADP(+) = desmosterol + NADPH + H(+). It carries out the reaction lanosterol + NADPH + H(+) = 24,25-dihydrolanosterol + NADP(+). The protein operates within steroid biosynthesis; cholesterol biosynthesis. Its function is as follows. Catalyzes the reduction of the delta-24 double bond of sterol intermediates during cholesterol biosynthesis. In addition to its cholesterol-synthesizing activity, can protect cells from oxidative stress by reducing caspase 3 activity during apoptosis induced by oxidative stress. Also protects against amyloid-beta peptide-induced apoptosis. The chain is Delta(24)-sterol reductase (Dhcr24) from Mus musculus (Mouse).